We begin with the raw amino-acid sequence, 447 residues long: Nacrein (447 aa).

The N-terminal stretch at methionine 1–glycine 17 is a signal peptide. Asparagine 44 carries an N-linked (GlcNAc...) asparagine glycan. One can recognise an Alpha-carbonic anhydrase domain in the interval alanine 50–phenylalanine 446. Zn(2+)-binding residues include histidine 149, histidine 151, and histidine 174. The disordered stretch occupies residues aspartate 218–arginine 329. Residues glutamate 224–asparagine 236 are compositionally biased toward basic and acidic residues. Positions asparagine 237–glutamate 321 are enriched in low complexity. 27 consecutive repeat copies span residues glycine 242 to asparagine 244, glycine 245 to asparagine 247, glycine 248 to asparagine 250, glycine 251 to asparagine 253, glycine 254 to asparagine 256, glycine 257 to asparagine 259, glycine 260 to asparagine 262, serine 263 to asparagine 265, glycine 266 to asparagine 268, glycine 269 to asparagine 271, glycine 272 to asparagine 274, glycine 275 to asparagine 277, glycine 278 to asparagine 280, glycine 281 to asparagine 283, glycine 284 to asparagine 286, glycine 287 to asparagine 289, glycine 290 to asparagine 292, glycine 293 to asparagine 295, glycine 296 to asparagine 298, glycine 299 to asparagine 301, glycine 302 to asparagine 304, glycine 305 to asparagine 307, glycine 308 to asparagine 310, glycine 311 to asparagine 313, glycine 314 to asparagine 316, glycine 317 to asparagine 318, and glycine 320 to asparagine 322. A 27 X 3 AA approximate tandem repeats of G-X-N region spans residues glycine 242–asparagine 322. N-linked (GlcNAc...) asparagine glycosylation occurs at asparagine 261. Residue threonine 387–threonine 388 coordinates substrate.

Belongs to the alpha-carbonic anhydrase family. Homooligomer; disulfide-linked. May also be disulfide-linked to insoluble organic matrix. Zn(2+) is required as a cofactor. Post-translationally, N-glycosylated. Expressed at whole regions of the mantle epithelium tissue. Is found in the aragonitic nacreous and calcitic prismatic and foliated layers.

The protein localises to the secreted. The protein resides in the extracellular space. Its subcellular location is the extracellular matrix. The enzyme catalyses hydrogencarbonate + H(+) = CO2 + H2O. Functionally, acts as a negative regulator for calcification in the shells of mollusks. May function both as a calcium concentrator and as a carbonic anhydrase required for production of carbonate ions, which are assembled to CaCO(3) at mineralization sites. Is important for shell formation in both the calcitic prismatic layer and the aragonitic nacreous layer. The sequence is that of Nacrein from Pinctada fucata (Akoya pearl oyster).